Reading from the N-terminus, the 149-residue chain is Arginine repressor (149 aa).

It belongs to the ArgR family.

Its subcellular location is the cytoplasm. The protein operates within amino-acid biosynthesis; L-arginine biosynthesis [regulation]. Functionally, regulates arginine biosynthesis genes. The sequence is that of Arginine repressor from Exiguobacterium sibiricum (strain DSM 17290 / CCUG 55495 / CIP 109462 / JCM 13490 / 255-15).